The sequence spans 459 residues: Protein maelstrom (459 aa).

The segment at residues Ala-2 to Asn-69 is a DNA-binding region (HMG box). A disordered region spans residues Asn-43–Gln-78. Over residues Ala-63 to Gln-78 the composition is skewed to basic and acidic residues.

Belongs to the maelstrom family. In germaria and egg chambers, it is detected in the germline. In the germarium, it is in all regions, including region I where the germ cells are dividing. In early egg chambers, it is uniformly distributed throughout the nurse cells and oocyte but, by stage 5, it is most concentrated around the outer margins of the cells, closest to the periphery of the egg chamber. Level decreases in stages 5 and 6, but most noticeably in the oocyte, where protein level remains. No detectable protein from stage 8 onward (at protein level).

It is found in the cytoplasm. Its subcellular location is the nucleus. It localises to the perinuclear region. The protein localises to the cytoplasmic ribonucleoprotein granule. Its function is as follows. Involved both in the piRNA and miRNA metabolic processes. As a component of the meiotic nuage, plays a central role during oogenesis by repressing transposable elements and preventing their mobilization, which is essential for the germline integrity. Repression of transposable elements is mediated via the piRNA metabolic process, which mediates the repression of transposable elements during meiosis by forming complexes composed of piRNAs and Piwi proteins and governs the repression of transposons. As a nuclear component, it is required for proper differentiation in the germline stem cell (GSC) lineage by repressing microRNA-7 (miR-7), thereby acting as an indirect regulator of bag-of-marbles (Bam). Acts by binding to the promoter of miR-7 gene and repressing its expression; miR-7 repression alleviates the Bam repression by miR-7, thereby allowing differentiation in the germline stem cell (GSC) lineage. Indirectly required to position the microtubule organizing center in stage 2-6 oocytes. Involved in repression of long interspersed nuclear elements (LINEs) including HeT-A, I-element, TART and possibly mst40 LINEs; may have a role in production of piwi-interacting RNA (piRNA). This Drosophila melanogaster (Fruit fly) protein is Protein maelstrom.